We begin with the raw amino-acid sequence, 435 residues long: GTPase Der (435 aa).

2 EngA-type G domains span residues 4–167 (GIVA…PSHE) and 175–350 (TRVS…TALD). GTP-binding positions include 10–17 (GRPNVGKS), 57–61 (DTGGI), 119–122 (NKYD), 181–188 (GRPNVGKS), 228–232 (DTAGI), and 293–296 (NKWD). A KH-like domain is found at 351-435 (KKIKTSVFNE…PMSIIFRERK (85 aa)).

This sequence belongs to the TRAFAC class TrmE-Era-EngA-EngB-Septin-like GTPase superfamily. EngA (Der) GTPase family. In terms of assembly, associates with the 50S ribosomal subunit.

Functionally, GTPase that plays an essential role in the late steps of ribosome biogenesis. The polypeptide is GTPase Der (Mesoplasma florum (strain ATCC 33453 / NBRC 100688 / NCTC 11704 / L1) (Acholeplasma florum)).